The chain runs to 258 residues: Global transcriptional regulator CodY (258 aa).

The GAF domain stretch occupies residues 1-156 (MSSLLTKTRM…SATIVGMEML (156 aa)). A DNA-binding region (H-T-H motif) is located at residues 204-223 (ASKIADKVGITRSVIVNALR).

The protein belongs to the CodY family.

Its subcellular location is the cytoplasm. Functionally, DNA-binding global transcriptional regulator which is involved in the adaptive response to starvation and acts by directly or indirectly controlling the expression of numerous genes in response to nutrient availability. During rapid exponential growth, CodY is highly active and represses genes whose products allow adaptation to nutrient depletion. The sequence is that of Global transcriptional regulator CodY from Clostridium beijerinckii (strain ATCC 51743 / NCIMB 8052) (Clostridium acetobutylicum).